The primary structure comprises 406 residues: Peptidase T (406 aa).

A Zn(2+)-binding site is contributed by His82. Asp84 is an active-site residue. Zn(2+) is bound at residue Asp142. The Proton acceptor role is filled by Glu176. The Zn(2+) site is built by Glu177, Asp199, and His381.

It belongs to the peptidase M20B family. The cofactor is Zn(2+).

The protein localises to the cytoplasm. It catalyses the reaction Release of the N-terminal residue from a tripeptide.. Cleaves the N-terminal amino acid of tripeptides. The sequence is that of Peptidase T from Streptococcus agalactiae serotype V (strain ATCC BAA-611 / 2603 V/R).